The sequence spans 211 residues: Mitotic spindle assembly checkpoint protein MAD2B (211 aa).

An HORMA domain is found at 13–203 (QVVADILCEF…SDILKMQLYV (191 aa)).

In terms of assembly, homooligomer. Interacts with rev1. Interacts with rev3l. Interacts with fzr1 (in complex with the anaphase promoting complex APC). May interact with cdc20.

The protein localises to the nucleus. It localises to the cytoplasm. Its subcellular location is the cytoskeleton. The protein resides in the spindle. Its function is as follows. Adapter protein able to interact with different proteins and involved in different biological processes. Mediates the interaction between the error-prone DNA polymerase zeta catalytic subunit rev3l and the inserter polymerase rev1, thereby mediating the second polymerase switching in translesion DNA synthesis. Translesion DNA synthesis releases the replication blockade of replicative polymerases, stalled in presence of DNA lesions. May also play a role in signal transduction in response to DNA damage. May regulate the activation of the anaphase promoting complex APC thereby regulating progression through the cell cycle. Through transcriptional regulation may play a role in epithelial-mesenchymal transdifferentiation. This chain is Mitotic spindle assembly checkpoint protein MAD2B (mad2l2), found in Xenopus tropicalis (Western clawed frog).